The following is a 128-amino-acid chain: Sulfurtransferase TusD (128 aa).

Residue C78 is the Cysteine persulfide intermediate of the active site.

The protein belongs to the DsrE/TusD family. In terms of assembly, heterohexamer, formed by a dimer of trimers. The hexameric TusBCD complex contains 2 copies each of TusB, TusC and TusD. The TusBCD complex interacts with TusE.

It is found in the cytoplasm. Its function is as follows. Part of a sulfur-relay system required for 2-thiolation of 5-methylaminomethyl-2-thiouridine (mnm(5)s(2)U) at tRNA wobble positions. Accepts sulfur from TusA and transfers it in turn to TusE. The polypeptide is Sulfurtransferase TusD (Salmonella dublin (strain CT_02021853)).